Consider the following 265-residue polypeptide: 4-hydroxy-tetrahydrodipicolinate reductase (265 aa).

NAD(+) is bound by residues 9–14 (GALGRM), 100–102 (GTT), and 124–127 (SPNM). His158 functions as the Proton donor/acceptor in the catalytic mechanism. Residue His159 coordinates (S)-2,3,4,5-tetrahydrodipicolinate. Lys162 functions as the Proton donor in the catalytic mechanism. 168 to 169 (GT) contacts (S)-2,3,4,5-tetrahydrodipicolinate.

This sequence belongs to the DapB family.

It localises to the cytoplasm. The catalysed reaction is (S)-2,3,4,5-tetrahydrodipicolinate + NAD(+) + H2O = (2S,4S)-4-hydroxy-2,3,4,5-tetrahydrodipicolinate + NADH + H(+). The enzyme catalyses (S)-2,3,4,5-tetrahydrodipicolinate + NADP(+) + H2O = (2S,4S)-4-hydroxy-2,3,4,5-tetrahydrodipicolinate + NADPH + H(+). The protein operates within amino-acid biosynthesis; L-lysine biosynthesis via DAP pathway; (S)-tetrahydrodipicolinate from L-aspartate: step 4/4. In terms of biological role, catalyzes the conversion of 4-hydroxy-tetrahydrodipicolinate (HTPA) to tetrahydrodipicolinate. In Aquifex aeolicus (strain VF5), this protein is 4-hydroxy-tetrahydrodipicolinate reductase.